We begin with the raw amino-acid sequence, 113 residues long: Protein S100-A9 (113 aa).

An N-acetylalanine modification is found at Ala-2. 2 consecutive EF-hand domains span residues 13–48 (ITTI…QLAT) and 55–90 (RNEA…LIFA). His-21 contributes to the Zn(2+) binding site. The Ca(2+) site is built by Ser-24 and His-29. Asp-31 contributes to the Zn(2+) binding site. Ca(2+) is bound by residues Thr-32, Glu-37, Asp-68, Asn-70, Asp-72, Gln-74, and Glu-79. The Zn(2+) site is built by His-92 and His-96. His-107 carries the pros-methylhistidine modification.

It belongs to the S-100 family. In terms of assembly, homodimer. Preferentially exists as a heterodimer or heterotetramer with S100A8 known as calprotectin (S100A8/A9). S100A9 interacts with ATP2A2. S100A9 interacts with AGER, and with the heterodimeric complex formed by TLR4 and LY96 in the presence of calcium and/or zinc ions. S100A9 binds quinoline-3-carboxamides in the presence of calcium and/or zinc ions. S100A9 interacts with amyloid-beta protein 40. Calprotectin (S100A8/9) interacts with CEACAM3 and tubulin filaments in a calcium-dependent manner. Heterotetrameric calprotectin (S100A8/A9) interacts with ANXA6 and associates with tubulin filaments in activated monocytes. Calprotectin (S100A8/9) interacts with NCF2/P67PHOX, RAC1, RAC2, CYBA and CYBB. Calprotectin (S100A8/9) interacts with NOS2 to form the iNOS-S100A8/A9 transnitrosylase complex; induced by LDL(ox). Calprotectin (S100A8/9) interacts with CD69. Post-translationally, phosphorylated. Phosphorylation inhibits activation of tubulin polymerization. In terms of processing, methylation at His-107 by METTL9 reduces zinc-binding without affecting heterodimerization with S100A8.

It is found in the secreted. The protein localises to the cytoplasm. The protein resides in the cytoskeleton. Its subcellular location is the cell membrane. In terms of biological role, S100A9 is a calcium- and zinc-binding protein which plays a prominent role in the regulation of inflammatory processes and immune response. It can induce neutrophil chemotaxis, adhesion, can increase the bactericidal activity of neutrophils by promoting phagocytosis via activation of SYK, PI3K/AKT, and ERK1/2 and can induce degranulation of neutrophils by a MAPK-dependent mechanism. Predominantly found as calprotectin (S100A8/A9) which has a wide plethora of intra- and extracellular functions. The intracellular functions include: facilitating leukocyte arachidonic acid trafficking and metabolism, modulation of the tubulin-dependent cytoskeleton during migration of phagocytes and activation of the neutrophilic NADPH-oxidase. Also participates in regulatory T-cell differentiation together with CD69. Activates NADPH-oxidase by facilitating the enzyme complex assembly at the cell membrane, transferring arachidonic acid, an essential cofactor, to the enzyme complex and S100A8 contributes to the enzyme assembly by directly binding to NCF2/P67PHOX. The extracellular functions involve pro-inflammatory, antimicrobial, oxidant-scavenging and apoptosis-inducing activities. Its pro-inflammatory activity includes recruitment of leukocytes, promotion of cytokine and chemokine production, and regulation of leukocyte adhesion and migration. Acts as an alarmin or a danger associated molecular pattern (DAMP) molecule and stimulates innate immune cells via binding to pattern recognition receptors such as Toll-like receptor 4 (TLR4) and receptor for advanced glycation endproducts (AGER). Binding to TLR4 and AGER activates the MAP-kinase and NF-kappa-B signaling pathways resulting in the amplification of the pro-inflammatory cascade. Has antimicrobial activity towards bacteria and fungi and exerts its antimicrobial activity probably via chelation of Zn(2+) which is essential for microbial growth. Can induce cell death via autophagy and apoptosis and this occurs through the cross-talk of mitochondria and lysosomes via reactive oxygen species (ROS) and the process involves BNIP3. Can regulate neutrophil number and apoptosis by an anti-apoptotic effect; regulates cell survival via ITGAM/ITGB and TLR4 and a signaling mechanism involving MEK-ERK. Its role as an oxidant scavenger has a protective role in preventing exaggerated tissue damage by scavenging oxidants. The iNOS-S100A8/A9 transnitrosylase complex is proposed to direct selective inflammatory stimulus-dependent S-nitrosylation of multiple targets such as GAPDH, NXA5, EZR, MSN and VIM by recognizing a [IL]-x-C-x-x-[DE] motif. This Mus musculus (Mouse) protein is Protein S100-A9 (S100a9).